Reading from the N-terminus, the 220-residue chain is Charged multivesicular body protein 2a (220 aa).

Coiled-coil stretches lie at residues 12 to 53 (EELL…MAKQ) and 198 to 219 (EATA…NLRR). The disordered stretch occupies residues 196 to 220 (KGEATAALADADADLEERLNNLRRD). Residues 208-218 (ADLEERLNNLR) carry the MIT-interacting motif motif. Over residues 211 to 220 (EERLNNLRRD) the composition is skewed to basic and acidic residues.

The protein belongs to the SNF7 family. In terms of assembly, probable core component of the endosomal sorting required for transport complex III (ESCRT-III). ESCRT-III components are thought to multimerize to form a flat lattice on the perimeter membrane of the endosome.

It localises to the late endosome membrane. Its subcellular location is the cytoplasm. Its function is as follows. Probable core component of the endosomal sorting required for transport complex III (ESCRT-III) which is involved in multivesicular bodies (MVBs) formation and sorting of endosomal cargo proteins into MVBs. MVBs contain intraluminal vesicles (ILVs) that are generated by invagination and scission from the limiting membrane of the endosome and mostly are delivered to lysosomes enabling degradation of membrane proteins, such as stimulated growth factor receptors, lysosomal enzymes and lipids. The protein is Charged multivesicular body protein 2a (chmp2a) of Xenopus laevis (African clawed frog).